A 454-amino-acid chain; its full sequence is Probable ECA polymerase (454 aa).

The next 11 membrane-spanning stretches (helical) occupy residues 3–23 (LGQF…ILTL), 39–59 (FSML…MLVF), 61–81 (FGVA…ATAF), 119–139 (LALV…FLLF), 154–174 (GVAL…VYFL), 180–200 (AWFF…VIVG), 201–221 (GTRA…IVRG), 222–242 (WITL…MFWL), 340–360 (LVVM…GLII), 377–397 (YKAA…IVLA), and 409–429 (VFFC…YWLF).

It belongs to the WzyE family. In terms of assembly, probably part of a complex composed of WzxE, WzyE and WzzE.

Its subcellular location is the cell inner membrane. It functions in the pathway bacterial outer membrane biogenesis; enterobacterial common antigen biosynthesis. Probably involved in the polymerization of enterobacterial common antigen (ECA) trisaccharide repeat units. This is Probable ECA polymerase from Yersinia pseudotuberculosis serotype O:1b (strain IP 31758).